Consider the following 433-residue polypeptide: Trigger factor (433 aa).

Residues 165–250 (GDSAIIDFEG…LHNIQEKVKV (86 aa)) enclose the PPIase FKBP-type domain.

The protein belongs to the FKBP-type PPIase family. Tig subfamily.

It is found in the cytoplasm. It carries out the reaction [protein]-peptidylproline (omega=180) = [protein]-peptidylproline (omega=0). Its function is as follows. Involved in protein export. Acts as a chaperone by maintaining the newly synthesized protein in an open conformation. Functions as a peptidyl-prolyl cis-trans isomerase. The protein is Trigger factor of Sulfurimonas denitrificans (strain ATCC 33889 / DSM 1251) (Thiomicrospira denitrificans (strain ATCC 33889 / DSM 1251)).